Consider the following 20-residue polypeptide: 2-oxo-acid reductase (20 aa).

Belongs to the AOR/FOR family. As to quaternary structure, forms various types of homooligomers. Requires [4Fe-4S] cluster as cofactor. It depends on Mo-molybdopterin as a cofactor.

It is found in the cell membrane. It carries out the reaction a (2R)-2-hydroxycarboxylate + A = a 2-oxocarboxylate + AH2. With respect to regulation, is inhibited by cyanide. Is sensitive to oxygen. Functionally, oxidoreductase with an extremely broad substrate specificity that can reduce reversibly 2-oxocarboxylates to (2R)-hydroxycarboxylates. The sequence is that of 2-oxo-acid reductase from Proteus hauseri.